The sequence spans 124 residues: Small ribosomal subunit protein uS13 (124 aa).

Residues 98 to 124 (VRGQRTKTNARTRKGPKRTIAGKKKAR) form a disordered region.

This sequence belongs to the universal ribosomal protein uS13 family. As to quaternary structure, part of the 30S ribosomal subunit. Forms a loose heterodimer with protein S19. Forms two bridges to the 50S subunit in the 70S ribosome.

In terms of biological role, located at the top of the head of the 30S subunit, it contacts several helices of the 16S rRNA. In the 70S ribosome it contacts the 23S rRNA (bridge B1a) and protein L5 of the 50S subunit (bridge B1b), connecting the 2 subunits; these bridges are implicated in subunit movement. Contacts the tRNAs in the A and P-sites. The chain is Small ribosomal subunit protein uS13 from Mycobacterium leprae (strain Br4923).